Here is a 162-residue protein sequence, read N- to C-terminus: NADH-quinone oxidoreductase subunit I (162 aa).

4Fe-4S ferredoxin-type domains follow at residues 52–82 (LRRY…IEAG) and 93–122 (TRYD…EGPN). [4Fe-4S] cluster is bound by residues cysteine 62, cysteine 65, cysteine 68, cysteine 72, cysteine 102, cysteine 105, cysteine 108, and cysteine 112.

The protein belongs to the complex I 23 kDa subunit family. NDH-1 is composed of 14 different subunits. Subunits NuoA, H, J, K, L, M, N constitute the membrane sector of the complex. [4Fe-4S] cluster serves as cofactor.

The protein localises to the cell inner membrane. It carries out the reaction a quinone + NADH + 5 H(+)(in) = a quinol + NAD(+) + 4 H(+)(out). Functionally, NDH-1 shuttles electrons from NADH, via FMN and iron-sulfur (Fe-S) centers, to quinones in the respiratory chain. The immediate electron acceptor for the enzyme in this species is believed to be ubiquinone. Couples the redox reaction to proton translocation (for every two electrons transferred, four hydrogen ions are translocated across the cytoplasmic membrane), and thus conserves the redox energy in a proton gradient. The chain is NADH-quinone oxidoreductase subunit I from Methylobacterium radiotolerans (strain ATCC 27329 / DSM 1819 / JCM 2831 / NBRC 15690 / NCIMB 10815 / 0-1).